We begin with the raw amino-acid sequence, 331 residues long: Hyaluronidase B (331 aa).

Cystine bridges form between Cys19/Cys308 and Cys185/Cys197. Asn79 carries an N-linked (GlcNAc...) asparagine glycan. The active-site Proton donor is Glu109.

This sequence belongs to the glycosyl hydrolase 56 family. As to expression, expressed by the venom gland.

It localises to the secreted. It catalyses the reaction Random hydrolysis of (1-&gt;4)-linkages between N-acetyl-beta-D-glucosamine and D-glucuronate residues in hyaluronate.. Hydrolyzes high molecular weight hyaluronic acid to produce small oligosaccharides. In Vespa velutina (Asian yellow-legged hornet), this protein is Hyaluronidase B.